The primary structure comprises 108 residues: Putative double-stranded DNA mimic protein PBPRA1522 (108 aa).

The protein belongs to the putative dsDNA mimic protein family.

Functionally, may act as a double-stranded DNA (dsDNA) mimic. Probably regulates the activity of a dsDNA-binding protein. The polypeptide is Putative double-stranded DNA mimic protein PBPRA1522 (Photobacterium profundum (strain SS9)).